The following is a 442-amino-acid chain: Trigger factor (442 aa).

Residues 165–250 (DDRVIIDFEG…LQKVMAPELP (86 aa)) form the PPIase FKBP-type domain.

The protein belongs to the FKBP-type PPIase family. Tig subfamily.

It localises to the cytoplasm. It catalyses the reaction [protein]-peptidylproline (omega=180) = [protein]-peptidylproline (omega=0). Involved in protein export. Acts as a chaperone by maintaining the newly synthesized protein in an open conformation. Functions as a peptidyl-prolyl cis-trans isomerase. The chain is Trigger factor from Coxiella burnetii (strain CbuG_Q212) (Coxiella burnetii (strain Q212)).